Reading from the N-terminus, the 138-residue chain is MAEKMKLEIVTPYSKVLDELVDEVTATGKMGEFGVLPGHAPFLTSLNIGELCYKKDGQAVSMALNWGYFEVQDDKIIVLVETAERSDEIDLERAKAALGRAEDALKKLTPEDKQFKVYEAALERALIRMQVAGKAARK.

Belongs to the ATPase epsilon chain family. As to quaternary structure, F-type ATPases have 2 components, CF(1) - the catalytic core - and CF(0) - the membrane proton channel. CF(1) has five subunits: alpha(3), beta(3), gamma(1), delta(1), epsilon(1). CF(0) has three main subunits: a, b and c.

The protein resides in the cell inner membrane. Functionally, produces ATP from ADP in the presence of a proton gradient across the membrane. This chain is ATP synthase epsilon chain, found in Trichlorobacter lovleyi (strain ATCC BAA-1151 / DSM 17278 / SZ) (Geobacter lovleyi).